Reading from the N-terminus, the 415-residue chain is MSLEAEVPELGQDDSQRELTIKEEYQLWRKNCRYMYEFVSETALTWPSLTIQWLPENKTNEAEGLIDAKLLLGTHTSGEDTNYLKLASTQIPLSNSSNTEEKSNKKVTSRIKITKKFENNFEINRARYMPQDPSIVSTINGAGEIDLYNLGGDQKTAIAHFTPHEDNGYGLSWSPHKKGYLLTASDDKTVVLTDTSRLDATDLSQVCKFTTHKDIVNDAKWHQFDESLFGSVSDDKYFYLFDIRTPGEPVSKFYHPESEGINSLSFSPFSQYLVATGNANSNISLLDTRKLSTKSAVSDGLLHTMMGHSDSITSLEFSPHKDGMLASGSQDRRLILWDLFKVGEEQAQEDAEDGCPELFMMHAGHTGAVTDLSWCPYKDWTIGSVADDNIVHLWEIGKTLLNAEKGIELKDTDLE.

5 WD repeats span residues 118–158 (ENNF…KTAI), 163–203 (PHED…ATDL), 211–251 (THKD…EPVS), 256–296 (PESE…TKSA), and 307–347 (GHSD…EEQA). The segment at 349-353 (EDAED) is interaction with the histone H4 N-terminus. The stretch at 364-404 (GHTGAVTDLSWCPYKDWTIGSVADDNIVHLWEIGKTLLNAE) is one WD 6 repeat.

Belongs to the WD repeat RBAP46/RBAP48/MSI1 family. Component of the HAT-B complex composed of at least HAT1 and HAT2. The HAT-B complex binds to histone H4 tail.

It is found in the cytoplasm. It localises to the nucleus. Regulatory subunit of the histone acetylase B (HAT-B) complex. The complex acetylates 'Lys-12' of histone H4 which is required for telomeric silencing. In Debaryomyces hansenii (strain ATCC 36239 / CBS 767 / BCRC 21394 / JCM 1990 / NBRC 0083 / IGC 2968) (Yeast), this protein is Histone acetyltransferase type B subunit 2 (HAT2).